The following is a 281-amino-acid chain: Bifunctional protein FolD (281 aa).

Residues 164-166 (GRS), Ser-189, and Ile-230 each bind NADP(+).

This sequence belongs to the tetrahydrofolate dehydrogenase/cyclohydrolase family. As to quaternary structure, homodimer.

It carries out the reaction (6R)-5,10-methylene-5,6,7,8-tetrahydrofolate + NADP(+) = (6R)-5,10-methenyltetrahydrofolate + NADPH. It catalyses the reaction (6R)-5,10-methenyltetrahydrofolate + H2O = (6R)-10-formyltetrahydrofolate + H(+). It functions in the pathway one-carbon metabolism; tetrahydrofolate interconversion. In terms of biological role, catalyzes the oxidation of 5,10-methylenetetrahydrofolate to 5,10-methenyltetrahydrofolate and then the hydrolysis of 5,10-methenyltetrahydrofolate to 10-formyltetrahydrofolate. The protein is Bifunctional protein FolD of Pelagibacter ubique (strain HTCC1062).